The following is a 97-amino-acid chain: Small ribosomal subunit protein bS6 (97 aa).

Belongs to the bacterial ribosomal protein bS6 family.

Functionally, binds together with bS18 to 16S ribosomal RNA. The sequence is that of Small ribosomal subunit protein bS6 from Lactococcus lactis subsp. cremoris (strain MG1363).